Reading from the N-terminus, the 122-residue chain is Ribosome-binding factor A (122 aa).

Belongs to the RbfA family. As to quaternary structure, monomer. Binds 30S ribosomal subunits, but not 50S ribosomal subunits or 70S ribosomes.

Its subcellular location is the cytoplasm. Functionally, one of several proteins that assist in the late maturation steps of the functional core of the 30S ribosomal subunit. Associates with free 30S ribosomal subunits (but not with 30S subunits that are part of 70S ribosomes or polysomes). Required for efficient processing of 16S rRNA. May interact with the 5'-terminal helix region of 16S rRNA. This chain is Ribosome-binding factor A, found in Polaromonas sp. (strain JS666 / ATCC BAA-500).